A 362-amino-acid polypeptide reads, in one-letter code: Histidinol-phosphate aminotransferase (362 aa).

K218 bears the N6-(pyridoxal phosphate)lysine mark.

The protein belongs to the class-II pyridoxal-phosphate-dependent aminotransferase family. Histidinol-phosphate aminotransferase subfamily. In terms of assembly, homodimer. Pyridoxal 5'-phosphate serves as cofactor.

The enzyme catalyses L-histidinol phosphate + 2-oxoglutarate = 3-(imidazol-4-yl)-2-oxopropyl phosphate + L-glutamate. The protein operates within amino-acid biosynthesis; L-histidine biosynthesis; L-histidine from 5-phospho-alpha-D-ribose 1-diphosphate: step 7/9. This Xanthomonas campestris pv. campestris (strain B100) protein is Histidinol-phosphate aminotransferase.